We begin with the raw amino-acid sequence, 819 residues long: Advillin (819 aa).

The core stretch occupies residues Met-1–Asp-731. Residues Met-24–Ser-73 form a Gelsolin-like 1 repeat. Tyr-85 is subject to Phosphotyrosine. A 1,2-diacyl-sn-glycero-3-phospho-(1D-myo-inositol-4,5-bisphosphate) is bound by residues Lys-109–Lys-116 and Arg-135–Arg-143. Gelsolin-like repeat units follow at residues Ile-145 to Leu-185, Leu-262 to Gln-306, Glu-403 to Ala-454, Thr-525 to Ala-565, and Phe-628 to Lys-669. A required for interaction with F-actin region spans residues Phe-628–Phe-819. The segment at Ala-732–Phe-819 is headpiece. Tyr-748 and Tyr-758 each carry phosphotyrosine. An HP domain is found at Asp-753–Phe-819.

Belongs to the villin/gelsolin family. In terms of assembly, associates (via C-terminus) with actin. Interacts with F-actin. Interacts with SCARF1; the interaction occurs in embryonic dorsal root ganglions at 18 dpc and induces neurite-like outgrowth. Interacts with PLCE1. Interacts with ACTR2 and ACTR3; associates with the ARP2/3 complex. As to expression, most highly expressed in the endometrium of the uterus, the intestinal villi and the testes. Weaker expression also detected in the brain, dorsal root ganglions and on the surface of the tongue.

Its subcellular location is the cytoplasm. The protein localises to the cytoskeleton. The protein resides in the cell projection. It is found in the lamellipodium. It localises to the cell junction. Its subcellular location is the focal adhesion. The protein localises to the neuron projection. The protein resides in the axon. In terms of biological role, ca(2+)-regulated actin-binding protein which plays an important role in actin bundling. May have a unique function in the morphogenesis of neuronal cells which form ganglia. Required for SREC1-mediated regulation of neurite-like outgrowth. Plays a role in regenerative sensory axon outgrowth and remodeling processes after peripheral injury in neonates. Involved in the formation of long fine actin-containing filopodia-like structures in fibroblast. Plays a role in ciliogenesis. In podocytes, controls lamellipodia formation through the regulation of EGF-induced diacylglycerol generation by PLCE1 and ARP2/3 complex assembly. The protein is Advillin of Mus musculus (Mouse).